We begin with the raw amino-acid sequence, 906 residues long: Serine-aspartate repeat-containing protein C (906 aa).

An N-terminal signal peptide occupies residues 1–50 (MNNKKTATNRKGMIPNRLNKFSIRKYSVGTASILVGTTLIFGLSGHEAKA). The tract at residues 51 to 127 (AEHTNGELNQ…QPTKKNNDAT (77 aa)) is disordered. Positions 51 to 486 (AEHTNGELNQ…GSSTANGDQK (436 aa)) are ligand binding A region. 2 stretches are compositionally biased toward polar residues: residues 56 to 71 (GELN…PSEN) and 80 to 119 (RQQN…STQP). CNA-B domains follow at residues 487 to 597 (KYNL…YKTP) and 598 to 708 (KYSL…EEET). A disordered region spans residues 669-881 (KQTGTNTTED…TGSENNGSNN (213 aa)). Composition is skewed to acidic residues over residues 676–686 (TEDDKDADGGE) and 703–845 (YFEE…DSDS). Positions 869 to 873 (LPETG) match the LPXTG sorting signal motif. The residue at position 872 (Thr872) is a Pentaglycyl murein peptidoglycan amidated threonine. Positions 873-906 (GSENNGSNNATLFGGLFAALGSLLLFGRRKKQNK) are cleaved as a propeptide — removed by sortase.

The protein belongs to the serine-aspartate repeat-containing protein (SDr) family. Homodimerizes; via N2-Domain. Interacts with host NRXN1; this interaction mediates bacterial attachment to host cells.

It localises to the secreted. Its subcellular location is the cell wall. Cell surface-associated calcium-binding protein which plays an important role in adhesion and pathogenesis. Mediates interactions with components of the extracellular matrix such as host NRXN1 to promote bacterial adhesion. This chain is Serine-aspartate repeat-containing protein C (sdrC), found in Staphylococcus aureus (strain MRSA252).